Here is a 188-residue protein sequence, read N- to C-terminus: Adrenodoxin, mitochondrial (188 aa).

The transit peptide at 1–64 (MAAAPGARLL…RPLSVSARAR (64 aa)) directs the protein to the mitochondrion. Ser67 is subject to Phosphoserine. One can recognise a 2Fe-2S ferredoxin-type domain in the interval 69 to 175 (DKITVHFKNR…NMTVRVPEAV (107 aa)). Lys70 bears the N6-acetyllysine; alternate mark. At Lys70 the chain carries N6-succinyllysine; alternate. The [2Fe-2S] cluster site is built by Cys110, Cys116, Cys119, and Cys156. An N6-succinyllysine modification is found at Lys162. Ser181 carries the phosphoserine modification.

It belongs to the adrenodoxin/putidaredoxin family. In terms of assembly, interacts with CYP11A1. Requires [2Fe-2S] cluster as cofactor.

Its subcellular location is the mitochondrion matrix. Functionally, essential for the synthesis of various steroid hormones, participates in the reduction of mitochondrial cytochrome P450 for steroidogenesis. Transfers electrons from adrenodoxin reductase to CYP11A1, a cytochrome P450 that catalyzes cholesterol side-chain cleavage. Does not form a ternary complex with adrenodoxin reductase and CYP11A1 but shuttles between the two enzymes to transfer electrons. This is Adrenodoxin, mitochondrial (Fdx1) from Mus musculus (Mouse).